We begin with the raw amino-acid sequence, 655 residues long: MPLKWKTSSPAIWKFPVPVLKTSRSTPLSPAYISLVEEEDQHMKLSLGSSEMGLSSHLQSSKAGTTRIFTSNTHSSVVLQGFDQLRLEGLLCDVTLMPGDTDDAFPVHRVMMASASDYFKAMFTGGMKEQDLMCIKLHGVSKVGLRKIIDFIYTAKLSLNMDNLQDTLEAASFLQILPVLDFCKVFLISGVTLDNCVEVGRIANTYNLTEVDKYVNSFVLKNFPALLSTGEFLKLPFERLAFVLSSNSLKHCTELELFKATCRWLRLEEPRMDFAAKLMKNIRFPLMTPQELINYVQTVDFMRTDNTCVNLLLEASNYQMMPYMQPVMQSDRTAIRSDTTHLVTLGGVLRQQLVVSKELRMYDEKAHEWKSLAPMDAPRYQHGIAVIGNFLYVVGGQSNYDTKGKTAVDTVFRFDPRYNKWMQVASLNEKRTFFHLSALKGYLYAVGGRNAAGELPTVECYNPRTNEWTYVAKMSEPHYGHAGTVYGGVMYISGGITHDTFQKELMCFDPDTDKWIQKAPMTTVRGLHCMCTVGERLYVIGGNHFRGTSDYDDVLSCEYYSPILDQWTPIAAMLRGQSDVGVAVFENKIYVVGGYSWNNRCMVEIVQKYDPDKDEWHKVFDLPESLGGIRACTLTVFPPEETTPSPSRESPLSAP.

One can recognise a BTB domain in the interval 92-161 (CDVTLMPGDT…IYTAKLSLNM (70 aa)). The 102-residue stretch at 196 to 297 (CVEVGRIANT…TPQELINYVQ (102 aa)) folds into the BACK domain. Kelch repeat units follow at residues 341–389 (HLVT…VIGN), 390–441 (FLYV…ALKG), 442–488 (YLYA…VYGG), 490–535 (MYIS…TVGE), 537–587 (LYVI…VFEN), and 588–636 (KIYV…TLTV).

In terms of assembly, component of the BCR(KLHL9-KLHL13) E3 ubiquitin ligase complex, at least composed of CUL3, KLHL9, KLHL13 and RBX1. Interacts with AURKB.

It functions in the pathway protein modification; protein ubiquitination. Functionally, substrate-specific adapter of a BCR (BTB-CUL3-RBX1) E3 ubiquitin-protein ligase complex required for mitotic progression and cytokinesis. The BCR(KLHL9-KLHL13) E3 ubiquitin ligase complex mediates the ubiquitination of AURKB and controls the dynamic behavior of AURKB on mitotic chromosomes and thereby coordinates faithful mitotic progression and completion of cytokinesis. This chain is Kelch-like protein 13 (KLHL13), found in Bos taurus (Bovine).